An 85-amino-acid polypeptide reads, in one-letter code: Small ribosomal subunit protein uS17 (85 aa).

It belongs to the universal ribosomal protein uS17 family. In terms of assembly, part of the 30S ribosomal subunit.

Its function is as follows. One of the primary rRNA binding proteins, it binds specifically to the 5'-end of 16S ribosomal RNA. The sequence is that of Small ribosomal subunit protein uS17 from Desulforudis audaxviator (strain MP104C).